Here is a 480-residue protein sequence, read N- to C-terminus: Glycerol 3-phosphate dehydrogenase (480 aa).

FAD-binding positions include isoleucine 12, glutamate 31, threonine 40–threonine 41, and serine 45–isoleucine 47. The sn-glycerol 3-phosphate site is built by serine 45 and histidine 49. Histidine 49 serves as the catalytic Proton acceptor. Valine 172 is a binding site for FAD. Residues lysine 249 and arginine 310 each contribute to the sn-glycerol 3-phosphate site. Position 335-336 (isoleucine 335–glutamate 336) interacts with FAD. Serine 337 lines the sn-glycerol 3-phosphate pocket. Serine 341 contacts FAD. 4 residues coordinate [2Fe-2S] cluster: cysteine 400, cysteine 402, cysteine 437, and cysteine 442.

[2Fe-2S] cluster serves as cofactor.

It carries out the reaction sn-glycerol 3-phosphate + A = dihydroxyacetone phosphate + AH2. Its pathway is polyol metabolism; glycerol degradation via glycerol kinase pathway; glycerone phosphate from sn-glycerol 3-phosphate (aerobic route): step 1/1. Functionally, catalyzes the dehydrogenation of glycerol 3-phosphate to dihydroxyacetone phosphate. Is probably involved in anaerobic glycerol metabolism. Active in vitro with the artificial electron acceptor 2,6-dichlorophenolindophenol (DCPIP), but not with NAD or NADP. Also displays a very low oxidase activity in vitro on glycerol 3-phosphate with O2 as the electron acceptor, but this activity is most likely not physiological. The chain is Glycerol 3-phosphate dehydrogenase from Caloramator mitchellensis.